Consider the following 120-residue polypeptide: NAD(P)H-quinone oxidoreductase subunit 3, chloroplastic (120 aa).

The next 3 membrane-spanning stretches (helical) occupy residues 11–31 (VVFF…SKLI), 65–85 (FALI…WAIV), and 89–109 (LGIT…IGLV).

It belongs to the complex I subunit 3 family. NDH is composed of at least 16 different subunits, 5 of which are encoded in the nucleus.

It localises to the plastid. Its subcellular location is the chloroplast thylakoid membrane. It carries out the reaction a plastoquinone + NADH + (n+1) H(+)(in) = a plastoquinol + NAD(+) + n H(+)(out). The catalysed reaction is a plastoquinone + NADPH + (n+1) H(+)(in) = a plastoquinol + NADP(+) + n H(+)(out). In terms of biological role, NDH shuttles electrons from NAD(P)H:plastoquinone, via FMN and iron-sulfur (Fe-S) centers, to quinones in the photosynthetic chain and possibly in a chloroplast respiratory chain. The immediate electron acceptor for the enzyme in this species is believed to be plastoquinone. Couples the redox reaction to proton translocation, and thus conserves the redox energy in a proton gradient. In Mesostigma viride (Green alga), this protein is NAD(P)H-quinone oxidoreductase subunit 3, chloroplastic.